Consider the following 577-residue polypeptide: Zinc finger protein 384 (577 aa).

Residues 171–225 are disordered; that stretch reads TLTEEGGGGGGGGGSVAPKPPRGRKKKRMLESGLPEMNDPYVLSPEDDDDHQKDG. Residues 175–185 show a composition bias toward gly residues; sequence EGGGGGGGGGS. Serine 214 is modified (phosphoserine). C2H2-type zinc fingers lie at residues 228–250, 256–278, 284–306, 317–339, 345–367, 373–397, 403–425, and 433–455; these read YRCRMCSLTFYSKSEMQIHSKSH, HKCPHCSKTFANSSYLAQHIRIH, YSCNFCEKSFRQLSHLQQHTRIH, HKCPHCSKTFANTSYLAQHLRIH, YNCSYCQKAFRQLSHLQQHTRIH, YKCAHPGCEKAFTQLSNLQSHRRQH, FKCHNCHRAYTDAASLEVHLSTH, and YTCTICSRAYTSETYLMKHMRKH. The segment covering 501 to 515 has biased composition (low complexity); it reads QQQQQQQQQQQQQQQ. The segment at 501 to 550 is disordered; the sequence is QQQQQQQQQQQQQQQQPPPHFQSPGAAPQGGGGGDSNPNPPPQCSFDLTP.

The protein belongs to the krueppel C2H2-type zinc-finger protein family. In terms of assembly, interacts with BCAR1.

The protein localises to the nucleus. Transcription factor that binds the consensus DNA sequence [GC]AAAAA. Seems to bind and regulate the promoters of MMP1, MMP3, MMP7 and COL1A1. The sequence is that of Zinc finger protein 384 (ZNF384) from Homo sapiens (Human).